The sequence spans 563 residues: (R)-mandelonitrile lyase 1 (563 aa).

A signal peptide spans 1–27; the sequence is MEKSTMSAILLVLHLFVLLLQYSEVHS. FAD contacts are provided by residues 63–64, 82–83, V129, T133, and 137–140; these read TS, ER, and NAGV. N-linked (GlcNAc...) asparagine glycans are attached at residues N145 and N162. V244 lines the FAD pocket. C355 contributes to the substrate binding site. The N-linked (GlcNAc...) asparagine glycan is linked to N379. C426 and C477 are joined by a disulfide. Residue Y484 coordinates substrate. Residues 485–486 and G514 each bind FAD; that span reads WH. Residue H486 is the Proton donor of the active site. H524 (proton acceptor) is an active-site residue. 525–526 contributes to the FAD binding site; it reads PQ.

The protein belongs to the GMC oxidoreductase family. As to quaternary structure, monomer. FAD is required as a cofactor. Glycosylated. Seeds. Localized within cotyledonary parenchyma cells.

The protein localises to the vacuole. It localises to the aleurone grain. The enzyme catalyses (R)-mandelonitrile = benzaldehyde + hydrogen cyanide. Its function is as follows. Involved in cyanogenesis, the release of HCN from injured tissues. Catalyzes the stereospecific addition of HCN to a variety of aldehydes in vitro. It is a major seed constituent, and could have the additional role of a storage form for reduced nitrogen. This is (R)-mandelonitrile lyase 1 (MDL1) from Prunus serotina (Black cherry).